A 625-amino-acid chain; its full sequence is MNAAPTVLLQQTQTLSAAVTQPIPGSRKIFVQGSRADLQVPMREIVLTRTPTLFGGQDNPPLSVYDTSGPYTDPQAAIDLAAGLAPLRADWIAERGDTLPLEALSSSFGRGREHDARLDAVRFPSRRLPRVARSGANVTQMHYARRGIITPEMEFVAIRENQRLEAVTDAVLRKQHPGEAFGAAIQQRITPEFVREEIARGRAILPNNINHPESEPMIIGRNFLTKINANIGNSAVSSGIAEEVEKLVWSIRWGGDTVMDLSTGKHIHETRDWIIRNSPVPIGTVPIYQALEKVDGRAEELTWEIFRDTLIEQAEQGVDYFTIHAGVLLRYVPLTARRVTGIVSRGGSILAKWCLAHHKENFLYTHFEDICEIMKAYDVAFSLGDGLRPGCIADANDAAQFGELETLGELTKLAWKHDVQTMIEGPGHVPMQLIKENMDKQLRECGEAPFYTLGPLTTDIAPGYDHITSAIGAAMIGWFGTAMLCYVTPKEHLGLPNRQDVRDGIMAYKIAAHAADLAKGHPGVQVRDNALSKARFEFRWDDQFHLGLDPEKAKEFHDETLPKDAHKLAHFCSMCGPHFCSMKITQDVRDYAAEHGISEDHALEAGMQEKSGEFVAQGAQVYRAS.

Residues Asn-230, Met-259, Tyr-288, His-324, 344–346 (SRG), 385–388 (DGLR), and Glu-424 contribute to the substrate site. A Zn(2+)-binding site is contributed by His-428. Substrate is bound at residue Tyr-451. His-492 contributes to the Zn(2+) binding site. Residues Cys-572, Cys-575, and Cys-580 each contribute to the [4Fe-4S] cluster site.

Belongs to the ThiC family. Homodimer. [4Fe-4S] cluster is required as a cofactor.

The enzyme catalyses 5-amino-1-(5-phospho-beta-D-ribosyl)imidazole + S-adenosyl-L-methionine = 4-amino-2-methyl-5-(phosphooxymethyl)pyrimidine + CO + 5'-deoxyadenosine + formate + L-methionine + 3 H(+). Its pathway is cofactor biosynthesis; thiamine diphosphate biosynthesis. Catalyzes the synthesis of the hydroxymethylpyrimidine phosphate (HMP-P) moiety of thiamine from aminoimidazole ribotide (AIR) in a radical S-adenosyl-L-methionine (SAM)-dependent reaction. The polypeptide is Phosphomethylpyrimidine synthase (Xanthomonas campestris pv. campestris (strain 8004)).